A 277-amino-acid chain; its full sequence is Putative phosphoenolpyruvate synthase regulatory protein (277 aa).

An ADP-binding site is contributed by 157-164; the sequence is GVSRSGKT.

This sequence belongs to the pyruvate, phosphate/water dikinase regulatory protein family. PSRP subfamily.

The enzyme catalyses [pyruvate, water dikinase] + ADP = [pyruvate, water dikinase]-phosphate + AMP + H(+). It carries out the reaction [pyruvate, water dikinase]-phosphate + phosphate + H(+) = [pyruvate, water dikinase] + diphosphate. Bifunctional serine/threonine kinase and phosphorylase involved in the regulation of the phosphoenolpyruvate synthase (PEPS) by catalyzing its phosphorylation/dephosphorylation. This is Putative phosphoenolpyruvate synthase regulatory protein from Aromatoleum aromaticum (strain DSM 19018 / LMG 30748 / EbN1) (Azoarcus sp. (strain EbN1)).